A 426-amino-acid chain; its full sequence is Homeobox protein knotted-1-like LET12 (426 aa).

Disordered stretches follow at residues 1–26 (MEFQ…QQNA), 85–158 (QTSN…ENSW), and 270–290 (GVAP…DQAD). A compositionally biased stretch (low complexity) spans 15 to 24 (QQQQQQQQQQ). Residues 104–114 (AGGGSNGGGSG) show a composition bias toward gly residues. The span at 139 to 151 (ENNNNNNNNNNNN) shows a compositional bias: low complexity. An ELK domain is found at 327 to 347 (ELKHELKQGYKEKIVDIREEI). The homeobox; TALE-type DNA-binding region spans 348–411 (LRKRRAGKLP…NQRKRNWHSN (64 aa)). Positions 406 to 426 (RNWHSNPSTSSSQKSQTQECR) are disordered. Positions 413–426 (STSSSQKSQTQECR) are enriched in low complexity.

This sequence belongs to the TALE/KNOX homeobox family. As to expression, ubiquitously expressed in the mature plant.

Its subcellular location is the nucleus. May have a role to play in formative events in ovule and embryo morphogenesis. The protein is Homeobox protein knotted-1-like LET12 (LET12) of Solanum lycopersicum (Tomato).